A 128-amino-acid chain; its full sequence is Aspartate 1-decarboxylase (128 aa).

Ser-25 (schiff-base intermediate with substrate; via pyruvic acid) is an active-site residue. Ser-25 is subject to Pyruvic acid (Ser). Residue Thr-57 participates in substrate binding. Tyr-58 serves as the catalytic Proton donor. 73–75 lines the substrate pocket; that stretch reads GAA.

This sequence belongs to the PanD family. In terms of assembly, heterooctamer of four alpha and four beta subunits. Pyruvate is required as a cofactor. Post-translationally, is synthesized initially as an inactive proenzyme, which is activated by self-cleavage at a specific serine bond to produce a beta-subunit with a hydroxyl group at its C-terminus and an alpha-subunit with a pyruvoyl group at its N-terminus.

It localises to the cytoplasm. It carries out the reaction L-aspartate + H(+) = beta-alanine + CO2. It participates in cofactor biosynthesis; (R)-pantothenate biosynthesis; beta-alanine from L-aspartate: step 1/1. Its function is as follows. Catalyzes the pyruvoyl-dependent decarboxylation of aspartate to produce beta-alanine. The polypeptide is Aspartate 1-decarboxylase (Caldicellulosiruptor saccharolyticus (strain ATCC 43494 / DSM 8903 / Tp8T 6331)).